A 199-amino-acid chain; its full sequence is Pyridoxal 5'-phosphate synthase subunit PdxT (199 aa).

Glycine 51–serine 53 is an L-glutamine binding site. Residue cysteine 83 is the Nucleophile of the active site. L-glutamine contacts are provided by residues arginine 110 and isoleucine 137–arginine 138. Active-site charge relay system residues include histidine 172 and glutamate 174.

Belongs to the glutaminase PdxT/SNO family. In the presence of PdxS, forms a dodecamer of heterodimers. Only shows activity in the heterodimer.

It carries out the reaction aldehydo-D-ribose 5-phosphate + D-glyceraldehyde 3-phosphate + L-glutamine = pyridoxal 5'-phosphate + L-glutamate + phosphate + 3 H2O + H(+). The enzyme catalyses L-glutamine + H2O = L-glutamate + NH4(+). It participates in cofactor biosynthesis; pyridoxal 5'-phosphate biosynthesis. Its function is as follows. Catalyzes the hydrolysis of glutamine to glutamate and ammonia as part of the biosynthesis of pyridoxal 5'-phosphate. The resulting ammonia molecule is channeled to the active site of PdxS. This is Pyridoxal 5'-phosphate synthase subunit PdxT from Thermoplasma volcanium (strain ATCC 51530 / DSM 4299 / JCM 9571 / NBRC 15438 / GSS1).